We begin with the raw amino-acid sequence, 685 residues long: Frizzled-8 (685 aa).

An N-terminal signal peptide occupies residues 1–27; it reads MEWGYLLEVTSLLAALAVLQRSSGAAA. At 28-272 the chain is on the extracellular side; it reads ASAKELACQE…NPFFSQDERA (245 aa). Positions 30–151 constitute an FZ domain; it reads AKELACQEIT…GNPDTLCMDY (122 aa). Intrachain disulfides connect C35–C96, C43–C89, C80–C118, C107–C148, and C111–C135. N49 is a glycosylation site (N-linked (GlcNAc...) asparagine). Position 71 to 78 (71 to 78) interacts with hexadecanoate; that stretch reads QFWPLVEI. Positions 95 to 100 are wnt-binding; that stretch reads ICLEDY. Residues 147–152 are wnt-binding; that stretch reads LCMDYN. An N-linked (GlcNAc...) asparagine glycan is attached at N152. Residues 155-223 are disordered; that stretch reads DLTTAAPSPP…KARPPGGGAA (69 aa). The segment covering 161–176 has biased composition (pro residues); it reads PSPPRRLPPPPPPGEQ. Low complexity-rich tracts occupy residues 177 to 187 and 200 to 223; these read PPSGSGHSRPP and GSGD…GGAA. A helical transmembrane segment spans residues 273-293; sequence FTVFWIGLWSVLCFVSTFATV. Topologically, residues 294–309 are cytoplasmic; the sequence is STFLIDMERFKYPERP. Residues 310 to 330 traverse the membrane as a helical segment; it reads IIFLSACYLFVSVGYLVRLVA. The Extracellular segment spans residues 331 to 394; that stretch reads GHEKVACSGG…RYETTGPALC (64 aa). The helical transmembrane segment at 395–415 threads the bilayer; that stretch reads TVVFLLVYFFGMASSIWWVIL. Residues 416–437 are Cytoplasmic-facing; it reads SLTWFLAAGMKWGNEAIAGYSQ. A helical transmembrane segment spans residues 438-458; the sequence is YFHLAAWLVPSVKSIAVLALS. Topologically, residues 459-481 are extracellular; sequence SVDGDPVAGICYVGNQSLDNLRG. N-linked (GlcNAc...) asparagine glycosylation is present at N473. The chain crosses the membrane as a helical span at residues 482-502; the sequence is FVLAPLVIYLFIGTMFLLAGF. The Cytoplasmic portion of the chain corresponds to 503 to 530; sequence VSLFRIRSVIKQQGGPTKTHKLEKLMIR. The helical transmembrane segment at 531–551 threads the bilayer; sequence LGLFTVLYTVPAAVVVACLFY. At 552–582 the chain is on the extracellular side; the sequence is EQHNRPRWEATHNCPCLRDLQPDQARRPDYA. Residues 583 to 603 form a helical membrane-spanning segment; it reads VFMLKYFMCLVVGITSGVWVW. Topologically, residues 604 to 685 are cytoplasmic; it reads SGKTLESWRA…YPKQMPLSQV (82 aa). The Lys-Thr-X-X-X-Trp motif, mediates interaction with the PDZ domain of Dvl family members signature appears at 606–611; that stretch reads KTLESW. Residues 631–655 show a composition bias toward gly residues; sequence AGGSGPGGSGPGPGGGGGHGGGGGS. The interval 631 to 656 is disordered; the sequence is AGGSGPGGSGPGPGGGGGHGGGGGSL. A PDZ-binding motif is present at residues 683-685; that stretch reads SQV.

This sequence belongs to the G-protein coupled receptor Fz/Smo family. In terms of assembly, component of a Wnt-signaling complex that contains a WNT protein, a FZD protein and LRP5 or LRP6. Interacts directly with LRP5 or LRP6; the interaction is promoted by Wnt-binding and signaling and inhibited by DKK1. Interacts (via the PDZ-binding motif) with GPOC (via its PDZ domain). Interacts with RSPO1 and RSPO3. Interacts with glypican GPC3. Ubiquitinated by ZNRF3, leading to its degradation by the proteasome. In terms of tissue distribution, expressed in chondrocytes.

It localises to the membrane. Its subcellular location is the golgi apparatus. The protein localises to the cell membrane. Receptor for Wnt proteins. Component of the Wnt-Fzd-LRP5-LRP6 complex that triggers beta-catenin signaling through inducing aggregation of receptor-ligand complexes into ribosome-sized signalosomes. The beta-catenin canonical signaling pathway leads to the activation of disheveled proteins, inhibition of GSK-3 kinase, nuclear accumulation of beta-catenin and activation of Wnt target genes. A second signaling pathway involving PKC and calcium fluxes has been seen for some family members, but it is not yet clear if it represents a distinct pathway or if it can be integrated in the canonical pathway, as PKC seems to be required for Wnt-mediated inactivation of GSK-3 kinase. Both pathways seem to involve interactions with G-proteins. May be involved in transduction and intercellular transmission of polarity information during tissue morphogenesis and/or in differentiated tissues. Coreceptor along with RYK of Wnt proteins, such as WNT1. The chain is Frizzled-8 (Fzd8) from Mus musculus (Mouse).